Here is a 406-residue protein sequence, read N- to C-terminus: Phosphopentomutase (406 aa).

6 residues coordinate Mn(2+): D10, D305, H310, D346, H347, and H358.

It belongs to the phosphopentomutase family. Mn(2+) serves as cofactor.

The protein localises to the cytoplasm. The catalysed reaction is 2-deoxy-alpha-D-ribose 1-phosphate = 2-deoxy-D-ribose 5-phosphate. It catalyses the reaction alpha-D-ribose 1-phosphate = D-ribose 5-phosphate. It participates in carbohydrate degradation; 2-deoxy-D-ribose 1-phosphate degradation; D-glyceraldehyde 3-phosphate and acetaldehyde from 2-deoxy-alpha-D-ribose 1-phosphate: step 1/2. In terms of biological role, isomerase that catalyzes the conversion of deoxy-ribose 1-phosphate (dRib-1-P) and ribose 1-phosphate (Rib-1-P) to deoxy-ribose 5-phosphate (dRib-5-P) and ribose 5-phosphate (Rib-5-P), respectively. The polypeptide is Phosphopentomutase (Rhizobium johnstonii (strain DSM 114642 / LMG 32736 / 3841) (Rhizobium leguminosarum bv. viciae)).